Reading from the N-terminus, the 573-residue chain is Zinc finger protein 10 (573 aa).

The KRAB domain occupies 14-85 (VTFKDVFVDF…EREIHQETHP (72 aa)). A C2H2-type 1; atypical zinc finger spans residues 206 to 232 (DSCASNSNECGQTFCQNIHLIQFARTH). 9 consecutive C2H2-type zinc fingers follow at residues 265–287 (YECK…QLIH), 293–315 (YECK…QKTH), 321–343 (YECK…QRTH), 349–371 (YTCN…QRTH), 377–399 (YECP…QRTH), 405–427 (YECN…HRIH), 433–455 (FECK…QRTH), 461–483 (YECH…QRIH), and 489–511 (YECC…QRIH). The segment at 517–539 (YKCNQCGIIFSQNSPFIVHQIAH) adopts a C2H2-type 11; atypical zinc-finger fold.

This sequence belongs to the krueppel C2H2-type zinc-finger protein family. As to quaternary structure, interacts (via the KRAB domain) with TRIM28 (via the RBCC domain).

It is found in the nucleus. Functionally, may be involved in transcriptional regulation. The chain is Zinc finger protein 10 (ZNF10) from Homo sapiens (Human).